The following is a 266-amino-acid chain: Heat-inducible transcription repressor HrcA (266 aa).

It belongs to the HrcA family.

Functionally, negative regulator of class I heat shock genes (grpE-dnaK-dnaJ and groELS operons). Prevents heat-shock induction of these operons. The sequence is that of Heat-inducible transcription repressor HrcA from Helicobacter pylori (strain J99 / ATCC 700824) (Campylobacter pylori J99).